The following is a 720-amino-acid chain: Neurochondrin (720 aa).

Belongs to the neurochondrin family.

The protein localises to the cytoplasm. It localises to the cytosol. It is found in the cell projection. Its subcellular location is the dendrite. The protein resides in the postsynapse. In terms of biological role, probably involved in signal transduction, in the nervous system. Required for the spatial learning process. May also be involved in neurite outgrowth. This chain is Neurochondrin (ncdn), found in Xenopus laevis (African clawed frog).